A 129-amino-acid polypeptide reads, in one-letter code: Large ribosomal subunit protein bL12 (129 aa).

This sequence belongs to the bacterial ribosomal protein bL12 family. As to quaternary structure, homodimer. Part of the ribosomal stalk of the 50S ribosomal subunit. Forms a multimeric L10(L12)X complex, where L10 forms an elongated spine to which 2 to 4 L12 dimers bind in a sequential fashion. Binds GTP-bound translation factors.

In terms of biological role, forms part of the ribosomal stalk which helps the ribosome interact with GTP-bound translation factors. Is thus essential for accurate translation. This is Large ribosomal subunit protein bL12 from Treponema pallidum (strain Nichols).